Reading from the N-terminus, the 505-residue chain is Maturase K (505 aa).

The protein belongs to the intron maturase 2 family. MatK subfamily.

It localises to the plastid. The protein localises to the chloroplast. Its function is as follows. Usually encoded in the trnK tRNA gene intron. Probably assists in splicing its own and other chloroplast group II introns. The protein is Maturase K of Calycanthus floridus (Eastern sweetshrub).